Here is a 560-residue protein sequence, read N- to C-terminus: Putative transport protein PBPRA2420 (560 aa).

5 consecutive transmembrane segments (helical) span residues 5–25, 37–57, 66–86, 91–111, and 161–181; these read VASL…AVGL, VGNS…GFTF, FMLF…GIFF, HYLL…LAMT, and SLSV…IFLA. RCK C-terminal domains follow at residues 203 to 292 and 293 to 377; these read RGIG…FRNG and KEVF…IGFI. Helical transmembrane passes span 386–406, 409–429, 452–472, 477–497, 506–526, and 539–559; these read LLAF…TLAF, VAFG…LGFL, LMVF…DSFA, MVLV…YLFG, ALLF…DMIN, and AGTY…IIIM.

Belongs to the AAE transporter (TC 2.A.81) family. YbjL subfamily.

Its subcellular location is the cell membrane. The sequence is that of Putative transport protein PBPRA2420 from Photobacterium profundum (strain SS9).